Consider the following 393-residue polypeptide: Selenide, water dikinase (393 aa).

The segment at 1–21 (MSEKEGKVIPETNGMKRPRFD) is disordered. Residue Cys42 is part of the active site. ATP contacts are provided by residues Lys45, 68 to 70 (GMD), Asp93, Asp116, and 167 to 170 (GGQT). Residue Asp70 coordinates Mg(2+). Asp116 is a Mg(2+) binding site. Asp273 contributes to the Mg(2+) binding site.

Belongs to the selenophosphate synthase 1 family. Class I subfamily. In terms of assembly, homodimer. It depends on Mg(2+) as a cofactor.

The enzyme catalyses hydrogenselenide + ATP + H2O = selenophosphate + AMP + phosphate + 2 H(+). In terms of biological role, synthesizes selenophosphate from selenide and ATP. This is Selenide, water dikinase from Trypanosoma brucei brucei (strain 927/4 GUTat10.1).